A 415-amino-acid chain; its full sequence is Probable carboxypeptidase ACLA_013260 (415 aa).

Positions 1–17 (MKFPWLLLVKGAASVAA) are cleaved as a signal peptide. The N-linked (GlcNAc...) asparagine glycan is linked to asparagine 97. Residue aspartate 145 participates in Zn(2+) binding. Glutamate 177 serves as the catalytic Proton acceptor. Residue glutamate 178 coordinates Zn(2+). Asparagine 271 is a glycosylation site (N-linked (GlcNAc...) asparagine).

Belongs to the peptidase M20A family. Zn(2+) serves as cofactor.

The protein localises to the secreted. This chain is Probable carboxypeptidase ACLA_013260, found in Aspergillus clavatus (strain ATCC 1007 / CBS 513.65 / DSM 816 / NCTC 3887 / NRRL 1 / QM 1276 / 107).